Consider the following 324-residue polypeptide: Glyoxylate/hydroxypyruvate reductase B (324 aa).

Catalysis depends on residues arginine 237 and glutamate 266. Histidine 285 (proton donor) is an active-site residue.

The protein belongs to the D-isomer specific 2-hydroxyacid dehydrogenase family. GhrB subfamily. As to quaternary structure, homodimer.

The protein localises to the cytoplasm. The catalysed reaction is glycolate + NADP(+) = glyoxylate + NADPH + H(+). The enzyme catalyses (R)-glycerate + NAD(+) = 3-hydroxypyruvate + NADH + H(+). It carries out the reaction (R)-glycerate + NADP(+) = 3-hydroxypyruvate + NADPH + H(+). In terms of biological role, catalyzes the NADPH-dependent reduction of glyoxylate and hydroxypyruvate into glycolate and glycerate, respectively. This is Glyoxylate/hydroxypyruvate reductase B from Salmonella choleraesuis (strain SC-B67).